The sequence spans 439 residues: Glycosyl hydrolase DigH (439 aa).

The first 27 residues, 1-27 (MDICSRNKKLTIRRPAILVALALLLCS), serve as a signal peptide directing secretion. Cys-28 carries N-palmitoyl cysteine lipidation. Cys-28 is lipidated: S-diacylglycerol cysteine. Positions 34 to 54 (ESMVTPPAGSKPPATTQQSSQ) are disordered.

The protein belongs to the glycosyl hydrolase-like 10 (GHL10) family.

The protein resides in the cell outer membrane. Divisome-localized glycosyl hydrolase that cleaves peptide-free (denuded) peptidoglycans. The chain is Glycosyl hydrolase DigH from Escherichia coli O157:H7.